A 176-amino-acid polypeptide reads, in one-letter code: V-type proton ATPase 16 kDa proteolipid subunit (176 aa).

Topologically, residues 1–17 are lumenal; the sequence is MSVLLRSVTELCPVYSP. A helical membrane pass occupies residues 18–38; sequence FFGSMGITASIVFTVFGGAYG. Residues 39-62 are Cytoplasmic-facing; it reads TAKSSVGISSVGVMKPEFIMRSLF. Residues 63 to 83 form a helical membrane-spanning segment; sequence PVVFAGVIGLYGLIVCIVLFI. The Lumenal portion of the chain corresponds to 84–98; that stretch reads NVNKSEYSLNRAFLD. The helical transmembrane segment at 99 to 119 threads the bilayer; the sequence is LGAGLTCGLCGLASGMSIGIS. At 120-136 the chain is on the cytoplasmic side; the sequence is GDCGVRGAAQQPKLFVS. A helical membrane pass occupies residues 137–157; it reads MLICLIFSEALALYGFIVALI. The Lumenal segment spans residues 158–176; the sequence is MAATGDNSCVATASTSSSS.

Belongs to the V-ATPase proteolipid subunit family. As to quaternary structure, V-ATPase is a heteromultimeric enzyme composed of a peripheral catalytic V1 complex (main components: subunits A, B, C, D, E, and F) attached to an integral membrane V0 proton pore complex (main component: the proteolipid protein; which is present as a hexamer that forms the proton-conducting pore).

Its subcellular location is the vacuole membrane. Its function is as follows. Proton-conducting pore forming subunit of the membrane integral V0 complex of vacuolar ATPase. V-ATPase is responsible for acidifying a variety of intracellular compartments in eukaryotic cells. The protein is V-type proton ATPase 16 kDa proteolipid subunit (VMA3) of Entamoeba dispar.